The primary structure comprises 380 residues: Carbamoyl phosphate synthase small chain (380 aa).

The tract at residues 1 to 184 is CPSase; sequence MTTSTRGAHR…EAYVVPAIGE (184 aa). Residues serine 55, glycine 236, and glycine 238 each coordinate L-glutamine. A Glutamine amidotransferase type-1 domain is found at 188-380; it reads TVAAVDLGIK…FVNLMEGQRA (193 aa). The active-site Nucleophile is cysteine 264. 5 residues coordinate L-glutamine: phenylalanine 265, glutamine 268, asparagine 306, glycine 308, and phenylalanine 309. Residues histidine 354 and glutamate 356 contribute to the active site.

Belongs to the CarA family. Composed of two chains; the small (or glutamine) chain promotes the hydrolysis of glutamine to ammonia, which is used by the large (or ammonia) chain to synthesize carbamoyl phosphate. Tetramer of heterodimers (alpha,beta)4.

The enzyme catalyses hydrogencarbonate + L-glutamine + 2 ATP + H2O = carbamoyl phosphate + L-glutamate + 2 ADP + phosphate + 2 H(+). It carries out the reaction L-glutamine + H2O = L-glutamate + NH4(+). Its pathway is amino-acid biosynthesis; L-arginine biosynthesis; carbamoyl phosphate from bicarbonate: step 1/1. It functions in the pathway pyrimidine metabolism; UMP biosynthesis via de novo pathway; (S)-dihydroorotate from bicarbonate: step 1/3. Its function is as follows. Small subunit of the glutamine-dependent carbamoyl phosphate synthetase (CPSase). CPSase catalyzes the formation of carbamoyl phosphate from the ammonia moiety of glutamine, carbonate, and phosphate donated by ATP, constituting the first step of 2 biosynthetic pathways, one leading to arginine and/or urea and the other to pyrimidine nucleotides. The small subunit (glutamine amidotransferase) binds and cleaves glutamine to supply the large subunit with the substrate ammonia. This is Carbamoyl phosphate synthase small chain from Streptomyces coelicolor (strain ATCC BAA-471 / A3(2) / M145).